Here is a 334-residue protein sequence, read N- to C-terminus: Aspartate carbamoyltransferase catalytic subunit (334 aa).

Carbamoyl phosphate contacts are provided by Arg71 and Thr72. Residue Lys99 coordinates L-aspartate. Carbamoyl phosphate is bound by residues Arg121, His151, and Gln154. Arg184 and Arg239 together coordinate L-aspartate. Residues Gly280 and Pro281 each contribute to the carbamoyl phosphate site.

Belongs to the aspartate/ornithine carbamoyltransferase superfamily. ATCase family. Heterododecamer (2C3:3R2) of six catalytic PyrB chains organized as two trimers (C3), and six regulatory PyrI chains organized as three dimers (R2).

The catalysed reaction is carbamoyl phosphate + L-aspartate = N-carbamoyl-L-aspartate + phosphate + H(+). Its pathway is pyrimidine metabolism; UMP biosynthesis via de novo pathway; (S)-dihydroorotate from bicarbonate: step 2/3. Its function is as follows. Catalyzes the condensation of carbamoyl phosphate and aspartate to form carbamoyl aspartate and inorganic phosphate, the committed step in the de novo pyrimidine nucleotide biosynthesis pathway. In Pseudomonas savastanoi pv. phaseolicola (strain 1448A / Race 6) (Pseudomonas syringae pv. phaseolicola (strain 1448A / Race 6)), this protein is Aspartate carbamoyltransferase catalytic subunit.